The primary structure comprises 144 residues: 3-hydroxyacyl-[acyl-carrier-protein] dehydratase FabZ (144 aa).

His-51 is a catalytic residue.

The protein belongs to the thioester dehydratase family. FabZ subfamily.

The protein localises to the cytoplasm. The catalysed reaction is a (3R)-hydroxyacyl-[ACP] = a (2E)-enoyl-[ACP] + H2O. Its function is as follows. Involved in unsaturated fatty acids biosynthesis. Catalyzes the dehydration of short chain beta-hydroxyacyl-ACPs and long chain saturated and unsaturated beta-hydroxyacyl-ACPs. This Clostridium botulinum (strain Loch Maree / Type A3) protein is 3-hydroxyacyl-[acyl-carrier-protein] dehydratase FabZ.